A 453-amino-acid polypeptide reads, in one-letter code: Na(+)/H(+) antiporter NhaA 2 (453 aa).

12 helical membrane passes run 23–43, 74–94, 111–131, 139–159, 168–188, 191–211, 214–234, 235–255, 316–336, 345–365, 386–406, and 419–439; these read FLHI…AALI, LHFW…GMEI, LPMA…LSFG, GWAV…ALLG, VFLL…IAFF, GGLD…VIGL, IGVG…LGIL, LTGA…PVTA, VAFG…LSGV, WVMI…IVSV, IMLV…IANL, and LGVL…GVWS.

It belongs to the NhaA Na(+)/H(+) (TC 2.A.33) antiporter family.

It is found in the cell inner membrane. The enzyme catalyses Na(+)(in) + 2 H(+)(out) = Na(+)(out) + 2 H(+)(in). Functionally, na(+)/H(+) antiporter that extrudes sodium in exchange for external protons. The sequence is that of Na(+)/H(+) antiporter NhaA 2 from Pseudomonas putida (strain ATCC 47054 / DSM 6125 / CFBP 8728 / NCIMB 11950 / KT2440).